Here is a 546-residue protein sequence, read N- to C-terminus: MTTRYIFVTGGVVSSLGKGIAAASLAAILEARGLNVTIMKLDPYINVDPGTMSPTQHGEVFVTEDGAETDLDLGHYERFIRTKMNRRNNFTTGRIYEEVLRKERRGDYLGATIQVIPHITNAIKEKVIAGGEGHDVAIVEIGGTVGDIESLPFLESIRQLGVELGRDRTLFMHLTLVPFLGAAGEVKTKPTQHSVKELRSIGIAPDVLICRGDRAIPANERAKISLFCNVEERAVISLKDVDSIYKIPALLRSQGLDDLVVKRFGLECREADLSEWENVIYQEANPNGEVVIGMVGKYIELPDAYKSVNEALKHAGLKNRVSVTIKYIDSQTVEAKGDEVLQGLDGILVPGGFGERGVEGKILAAKYARENELPYFGICLGMQVALIEFARNVAGMADAHSTEFNKATPFPVVGLITEWVDEEGNVEQRHEASDLGGTMRLGAQLCHLLEGSKAAQAYKGNTCVERHRHRYEVNNKYRERLEQAGLVFSGLSSDRKLVEMIELKDHPWFVAGQFHPEFTSTPRDGHPLFEGFVAAASAHQKRDLKK.

Residues 1–266 form an amidoligase domain region; it reads MTTRYIFVTG…DDLVVKRFGL (266 aa). Residue serine 14 participates in CTP binding. A UTP-binding site is contributed by serine 14. ATP is bound by residues 15 to 20 and aspartate 72; that span reads SLGKGI. Aspartate 72 and glutamate 140 together coordinate Mg(2+). CTP is bound by residues 147–149, 187–192, and lysine 223; these read DIE and KTKPTQ. UTP contacts are provided by residues 187–192 and lysine 223; that span reads KTKPTQ. 239-241 is a binding site for ATP; it reads KDV. Residues 291-542 form the Glutamine amidotransferase type-1 domain; the sequence is VIGMVGKYIE…VAAASAHQKR (252 aa). Glycine 352 lines the L-glutamine pocket. Catalysis depends on cysteine 379, which acts as the Nucleophile; for glutamine hydrolysis. L-glutamine is bound by residues 380–383, glutamate 403, and arginine 470; that span reads LGMQ. Catalysis depends on residues histidine 515 and glutamate 517.

The protein belongs to the CTP synthase family. As to quaternary structure, homotetramer.

The enzyme catalyses UTP + L-glutamine + ATP + H2O = CTP + L-glutamate + ADP + phosphate + 2 H(+). It carries out the reaction L-glutamine + H2O = L-glutamate + NH4(+). It catalyses the reaction UTP + NH4(+) + ATP = CTP + ADP + phosphate + 2 H(+). Its pathway is pyrimidine metabolism; CTP biosynthesis via de novo pathway; CTP from UDP: step 2/2. Allosterically activated by GTP, when glutamine is the substrate; GTP has no effect on the reaction when ammonia is the substrate. The allosteric effector GTP functions by stabilizing the protein conformation that binds the tetrahedral intermediate(s) formed during glutamine hydrolysis. Inhibited by the product CTP, via allosteric rather than competitive inhibition. Catalyzes the ATP-dependent amination of UTP to CTP with either L-glutamine or ammonia as the source of nitrogen. Regulates intracellular CTP levels through interactions with the four ribonucleotide triphosphates. This is CTP synthase from Shewanella sp. (strain MR-4).